A 312-amino-acid chain; its full sequence is Ribosomal protein L11 methyltransferase (312 aa).

T163, G184, D206, and N248 together coordinate S-adenosyl-L-methionine.

This sequence belongs to the methyltransferase superfamily. PrmA family.

The protein resides in the cytoplasm. The catalysed reaction is L-lysyl-[protein] + 3 S-adenosyl-L-methionine = N(6),N(6),N(6)-trimethyl-L-lysyl-[protein] + 3 S-adenosyl-L-homocysteine + 3 H(+). Functionally, methylates ribosomal protein L11. The sequence is that of Ribosomal protein L11 methyltransferase from Clostridium botulinum (strain Loch Maree / Type A3).